The chain runs to 554 residues: CTP synthase (554 aa).

The amidoligase domain stretch occupies residues 1-265 (MTPLIFVTGG…DEIVIDQFKL (265 aa)). A CTP-binding site is contributed by S13. Residue S13 coordinates UTP. ATP-binding positions include 14–19 (SLGKGI) and D71. Residues D71 and E139 each contribute to the Mg(2+) site. CTP-binding positions include 146 to 148 (DIE), 186 to 191 (KTKPTQ), and K222. Residues 186-191 (KTKPTQ) and K222 contribute to the UTP site. The region spanning 292–545 (TIAVVGKYVD…VKASRARKAG (254 aa)) is the Glutamine amidotransferase type-1 domain. An L-glutamine-binding site is contributed by G353. C380 serves as the catalytic Nucleophile; for glutamine hydrolysis. L-glutamine-binding positions include 381–384 (YGMQ), E404, and R471. Catalysis depends on residues H518 and E520.

Belongs to the CTP synthase family. In terms of assembly, homotetramer.

It carries out the reaction UTP + L-glutamine + ATP + H2O = CTP + L-glutamate + ADP + phosphate + 2 H(+). It catalyses the reaction L-glutamine + H2O = L-glutamate + NH4(+). The enzyme catalyses UTP + NH4(+) + ATP = CTP + ADP + phosphate + 2 H(+). Its pathway is pyrimidine metabolism; CTP biosynthesis via de novo pathway; CTP from UDP: step 2/2. Allosterically activated by GTP, when glutamine is the substrate; GTP has no effect on the reaction when ammonia is the substrate. The allosteric effector GTP functions by stabilizing the protein conformation that binds the tetrahedral intermediate(s) formed during glutamine hydrolysis. Inhibited by the product CTP, via allosteric rather than competitive inhibition. Functionally, catalyzes the ATP-dependent amination of UTP to CTP with either L-glutamine or ammonia as the source of nitrogen. Regulates intracellular CTP levels through interactions with the four ribonucleotide triphosphates. In Xylella fastidiosa (strain M23), this protein is CTP synthase.